The chain runs to 396 residues: Seminal vesicle major clotting proteins (396 aa).

The N-terminal stretch at 1–21 (MKSTIFFILSLLLMLENQAAG) is a signal peptide. Residues 45-178 (MEEAVSGSGL…ASSVDHRKKG (134 aa)) are disordered. The segment covering 60–152 (RGSDREESVG…RVSVRHERVE (93 aa)) has biased composition (basic and acidic residues). SVP-3/-4 repeat repeat units lie at residues 65–88 (EESV…RSSV), 89–112 (EEPE…RHNV), and 113–136 (EEPE…RHSA). Residues 137-157 (EEPEGERVSVRHERVEKTHKR) form an SVP-3/-4 repeat; truncated repeat. Positions 177–192 (KGHIRFKRQDPIAALA) are excised as a propeptide. SVP-1 clotting repeat units lie at residues 194–217 (IEGQ…ERFS), 218–241 (VKGQ…ERFS), 242–265 (VTGQ…ERFS), 266–289 (MTGQ…ERFS), 290–313 (MTGQ…ERFS), 314–337 (VTGQ…ERFS), 338–361 (VTGQ…ERFS), and 362–385 (VSGQ…SGFS). The 9 X tandem repeats of SVP-1 like motif stretch occupies residues 194–396 (IEGQDAVKDS…KGQGSLKGLI (203 aa)). A disordered region spans residues 377–396 (QESVQSGFSVKGQGSLKGLI). The stretch at 386–396 (VKGQGSLKGLI) is one SVP-1 clotting 9; truncated repeat.

To the SVP-2 precursor, particularly in regions where protein processing must occur. SVP-3 may be a post-translationally modified form of SVP-4. Post-translationally, covalent clotting of SVP-1 is catalyzed by a transglutaminase secreted by the anterior prostate through the formation of gamma-glutamyl-epsilon-lysine cross-links. The conserved 2 Lys and 1 Gln residues per functional unit seem to be the residues involved in the formation of those cross-links.

It localises to the secreted. SVP-1 serves as substrate in the formation of the copulatory plug. SVP-3 and SVP-4 may also contribute to the clot. In Cavia porcellus (Guinea pig), this protein is Seminal vesicle major clotting proteins.